Here is a 360-residue protein sequence, read N- to C-terminus: MKASLLNKLDILQDRFEELTALLGDAEVISDQSRFRAYSREYAEVEPVIVAYRQLCKVQQDLEGAQALLKDSDPDMREMAEEEVAEAKAQLETLEANLQRMLLPKDPNDGRNVFLEIRAGTGGDEAAIFAGDLFRMYSRYAEKQGWRVEILSESEGEHGGYKEVISRVEGDNVYAKLKFESGAHRVQRVPETESQGRIHTSACTVAVLPEPDEQAAVEINPAELRIDTYRSSGAGGQHVNKTDSAIRITHLPTGIVVECQEERSQHKNRAKAMAWLAAKLQDRQDAAAHKEISETRKLLVGSGDRSERIRTYNFPQGRVTDHRVNLTLYSLNEVIGGAVEQVIEPLLQEYQADQLAALGD.

Residue Q237 is modified to N5-methylglutamine.

It belongs to the prokaryotic/mitochondrial release factor family. Post-translationally, methylated by PrmC. Methylation increases the termination efficiency of RF1.

It localises to the cytoplasm. In terms of biological role, peptide chain release factor 1 directs the termination of translation in response to the peptide chain termination codons UAG and UAA. This Stutzerimonas stutzeri (strain A1501) (Pseudomonas stutzeri) protein is Peptide chain release factor 1.